The chain runs to 476 residues: 23S rRNA (uracil(1939)-C(5))-methyltransferase RlmD (476 aa).

In terms of domain architecture, TRAM spans 1–55; it reads MVDEVLKIESLDLEARGIARRDGKVVFVEGALPGERVYAATVRRKPSYEIARVET. [4Fe-4S] cluster contacts are provided by Cys-68, Cys-74, Cys-77, and Cys-156. Residues Gln-265, Phe-294, Asn-299, Glu-315, Asn-343, and Asp-364 each contribute to the S-adenosyl-L-methionine site. Residue Cys-394 is the Nucleophile of the active site.

It belongs to the class I-like SAM-binding methyltransferase superfamily. RNA M5U methyltransferase family. RlmD subfamily.

The catalysed reaction is uridine(1939) in 23S rRNA + S-adenosyl-L-methionine = 5-methyluridine(1939) in 23S rRNA + S-adenosyl-L-homocysteine + H(+). In terms of biological role, catalyzes the formation of 5-methyl-uridine at position 1939 (m5U1939) in 23S rRNA. The chain is 23S rRNA (uracil(1939)-C(5))-methyltransferase RlmD from Bordetella avium (strain 197N).